The primary structure comprises 365 residues: Chorismate synthase (365 aa).

Positions 48 and 54 each coordinate NADP(+). Residues 125–127 (RSS), 238–239 (NA), G278, 293–297 (KPTSS), and R319 contribute to the FMN site.

The protein belongs to the chorismate synthase family. In terms of assembly, homotetramer. FMNH2 serves as cofactor.

The catalysed reaction is 5-O-(1-carboxyvinyl)-3-phosphoshikimate = chorismate + phosphate. Its pathway is metabolic intermediate biosynthesis; chorismate biosynthesis; chorismate from D-erythrose 4-phosphate and phosphoenolpyruvate: step 7/7. In terms of biological role, catalyzes the anti-1,4-elimination of the C-3 phosphate and the C-6 proR hydrogen from 5-enolpyruvylshikimate-3-phosphate (EPSP) to yield chorismate, which is the branch point compound that serves as the starting substrate for the three terminal pathways of aromatic amino acid biosynthesis. This reaction introduces a second double bond into the aromatic ring system. The sequence is that of Chorismate synthase from Vesicomyosocius okutanii subsp. Calyptogena okutanii (strain HA).